Reading from the N-terminus, the 283-residue chain is Nucleoid occlusion protein (283 aa).

A DNA-binding region (H-T-H motif) is located at residues 142 to 161 (ESLAQRLGKGQSTIANKLRL).

This sequence belongs to the ParB family.

Its subcellular location is the cytoplasm. It localises to the nucleoid. In terms of biological role, effects nucleoid occlusion by binding relatively nonspecifically to DNA and preventing the assembly of the division machinery in the vicinity of the nucleoid, especially under conditions that disturb the cell cycle. It helps to coordinate cell division and chromosome segregation by preventing the formation of the Z ring through the nucleoid, which would cause chromosome breakage. The chain is Nucleoid occlusion protein from Shouchella clausii (strain KSM-K16) (Alkalihalobacillus clausii).